The sequence spans 444 residues: IMP-specific 5'-nucleotidase 1 (444 aa).

The ATP site is built by Lys132 and His150. Residue Asp170 is the Nucleophile of the active site. Asp170, Asp172, Asp178, Thr204, Ser207, Ser308, Asp363, and Lys371 together coordinate IMP. The Mg(2+) site is built by Asp170 and Asp172. Asp172 (proton donor) is an active-site residue. Asp394 contacts Mg(2+).

The protein belongs to the ISN1 family. Homotetramer. Mg(2+) is required as a cofactor.

It localises to the cytoplasm. The catalysed reaction is IMP + H2O = inosine + phosphate. With respect to regulation, at physiological pH, allosterically activated by ATP. ATP binding is a prerequisite to magnesium and substrate binding. ATP binds to 2 of the subunits in the homotetramer inducing a closure of these 2 subunits and the release of the C-terminal loop, thereby activating the enzyme. In this conformation, the enzyme can bind IMP and magnesium which ultimately leads to the release of ATP. At pH 5, ATP does not have an allosteric role and is dispensable for magnesium and substrate binding. Inhibited by phosphocholine and D-myo-inositol-4-phosphate. In terms of biological role, specifically, catalyzes the dephosphorylation of inosine monophosphate (IMP) into inosine. By dephosphorylating IMP, plays a role in the purine salvage pathway. Does not have phosphotransferase activity with IMP as phosphate donor and adenosine as phosphate acceptor. The sequence is that of IMP-specific 5'-nucleotidase 1 from Plasmodium falciparum (isolate 3D7).